A 382-amino-acid polypeptide reads, in one-letter code: Guanine nucleotide-binding protein G(s) subunit alpha (382 aa).

Residues 1 to 14 (MGCFGSPTSKQSDV) show a composition bias toward polar residues. Residues 1–31 (MGCFGSPTSKQSDVNSEDSKSQKRRSDAISR) are disordered. A lipid anchor (N-palmitoyl glycine) is attached at Gly2. Residue Cys3 is the site of S-palmitoyl cysteine attachment. Residues 17-31 (EDSKSQKRRSDAISR) show a composition bias toward basic and acidic residues. Residues 42–382 (ATHRLLLLGA…RMHLRQYELL (341 aa)) enclose the G-alpha domain. The tract at residues 45 to 58 (RLLLLGAGESGKST) is G1 motif. GTP is bound by residues 50-57 (GAGESGKS), 51-58 (AGESGKST), 186-192 (LRCRVLT), 211-215 (DVGGQ), 212-216 (VGGQR), 280-283 (NKQD), 281-284 (KQDL), and Ala354. Residues Ser57 and Thr192 each contribute to the Mg(2+) site. Residues 184–192 (DILRCRVLT) are G2 motif. Residues 207-216 (FHMFDVGGQR) are G3 motif. The interval 276-283 (ILFLNKQD) is G4 motif. The tract at residues 352-357 (TCAVDT) is G5 motif.

It belongs to the G-alpha family. G(s) subfamily. G proteins are composed of 3 units; alpha, beta and gamma. The alpha chain contains the guanine nucleotide binding site.

Its function is as follows. Guanine nucleotide-binding proteins (G proteins) are involved as modulators or transducers in various transmembrane signaling systems. The G(s) protein is involved in hormonal regulation of adenylate cyclase: it activates the cyclase. In Drosophila pseudoobscura pseudoobscura (Fruit fly), this protein is Guanine nucleotide-binding protein G(s) subunit alpha (G-salpha60A).